The sequence spans 293 residues: Ribosomal protein L11 methyltransferase (293 aa).

The S-adenosyl-L-methionine site is built by threonine 146, glycine 167, aspartate 189, and asparagine 230.

Belongs to the methyltransferase superfamily. PrmA family.

It is found in the cytoplasm. It carries out the reaction L-lysyl-[protein] + 3 S-adenosyl-L-methionine = N(6),N(6),N(6)-trimethyl-L-lysyl-[protein] + 3 S-adenosyl-L-homocysteine + 3 H(+). In terms of biological role, methylates ribosomal protein L11. This is Ribosomal protein L11 methyltransferase from Colwellia psychrerythraea (strain 34H / ATCC BAA-681) (Vibrio psychroerythus).